Consider the following 300-residue polypeptide: Porphobilinogen deaminase (300 aa).

S-(dipyrrolylmethanemethyl)cysteine is present on Cys239.

It belongs to the HMBS family. Monomer. Dipyrromethane is required as a cofactor.

It carries out the reaction 4 porphobilinogen + H2O = hydroxymethylbilane + 4 NH4(+). The protein operates within porphyrin-containing compound metabolism; protoporphyrin-IX biosynthesis; coproporphyrinogen-III from 5-aminolevulinate: step 2/4. Tetrapolymerization of the monopyrrole PBG into the hydroxymethylbilane pre-uroporphyrinogen in several discrete steps. This Francisella tularensis subsp. tularensis (strain FSC 198) protein is Porphobilinogen deaminase.